Here is a 302-residue protein sequence, read N- to C-terminus: Segregation and condensation protein A (302 aa).

The protein belongs to the ScpA family. Component of a cohesin-like complex composed of ScpA, ScpB and the Smc homodimer, in which ScpA and ScpB bind to the head domain of Smc. The presence of the three proteins is required for the association of the complex with DNA.

The protein resides in the cytoplasm. Functionally, participates in chromosomal partition during cell division. May act via the formation of a condensin-like complex containing Smc and ScpB that pull DNA away from mid-cell into both cell halves. The protein is Segregation and condensation protein A of Xylella fastidiosa (strain Temecula1 / ATCC 700964).